The chain runs to 500 residues: ATP synthase subunit alpha (500 aa).

Residue 169–176 coordinates ATP; the sequence is GDRQTGKT.

The protein belongs to the ATPase alpha/beta chains family. In terms of assembly, F-type ATPases have 2 components, CF(1) - the catalytic core - and CF(0) - the membrane proton channel. CF(1) has five subunits: alpha(3), beta(3), gamma(1), delta(1), epsilon(1). CF(0) has three main subunits: a(1), b(2) and c(9-12). The alpha and beta chains form an alternating ring which encloses part of the gamma chain. CF(1) is attached to CF(0) by a central stalk formed by the gamma and epsilon chains, while a peripheral stalk is formed by the delta and b chains.

It is found in the cell membrane. It carries out the reaction ATP + H2O + 4 H(+)(in) = ADP + phosphate + 5 H(+)(out). In terms of biological role, produces ATP from ADP in the presence of a proton gradient across the membrane. The alpha chain is a regulatory subunit. This chain is ATP synthase subunit alpha, found in Clostridioides difficile (strain 630) (Peptoclostridium difficile).